Reading from the N-terminus, the 426-residue chain is Transcription termination factor Rho (426 aa).

A Rho RNA-BD domain is found at glutamine 58 to aspartate 131. Residues glycine 176–alanine 181, lysine 188–threonine 193, and arginine 219 contribute to the ATP site.

Belongs to the Rho family. As to quaternary structure, homohexamer. The homohexamer assembles into an open ring structure.

Its function is as follows. Facilitates transcription termination by a mechanism that involves Rho binding to the nascent RNA, activation of Rho's RNA-dependent ATPase activity, and release of the mRNA from the DNA template. This Deinococcus radiodurans (strain ATCC 13939 / DSM 20539 / JCM 16871 / CCUG 27074 / LMG 4051 / NBRC 15346 / NCIMB 9279 / VKM B-1422 / R1) protein is Transcription termination factor Rho.